We begin with the raw amino-acid sequence, 71 residues long: Brevinin-1CG4 (71 aa).

Positions 1–22 are cleaved as a signal peptide; sequence MFTLKKSLLLLFFLGTINLSLC. Positions 23–45 are cleaved as a propeptide — removed in mature form; sequence EQERNADEEERRDDSDKRDVEVE. A disulfide bridge connects residues Cys-65 and Cys-71.

This sequence belongs to the frog skin active peptide (FSAP) family. Brevinin subfamily. As to expression, expressed by the skin glands.

It is found in the secreted. Antimicrobial peptide active against a variety of Gram-positive and some Gram-negative bacterial strains. Has antifungal activity against C.albicans ATCC 10231 and a slime mold isolate. Has hemolytic activity against human erythrocytes. This is Brevinin-1CG4 from Amolops chunganensis (Chungan torrent frog).